The chain runs to 339 residues: FR-33289 synthase (339 aa).

3 residues coordinate Fe(2+): H150, D152, and H288.

Belongs to the TfdA dioxygenase family. As to quaternary structure, homodimer. Fe(2+) is required as a cofactor.

It catalyses the reaction 3-(N-acetyl-N-hydroxy)aminopropylphosphonate + 2-oxoglutarate + O2 = (R)-(3-(acetylhydroxyamino)-2-hydroxypropyl)phosphonate + succinate + CO2. Its pathway is antibiotic biosynthesis. In terms of biological role, monooxygenase involved in the biosynthesis of the phosphonate antibiotic FR-33289, an antimalarial agent. Catalyzes the oxidative decarboxylation of the antibiotic FR-900098 (3-(N-acetyl-N-hydroxy)aminopropylphosphonate) to form FR-33289 ((R)-(3-(acetylhydroxyamino)-2-hydroxypropyl)phosphonate). The polypeptide is FR-33289 synthase (Streptomyces rubellomurinus (strain ATCC 31215)).